Reading from the N-terminus, the 912-residue chain is Accessory gland protein Acp36DE (912 aa).

The first 23 residues, Met-1–Ser-23, serve as a signal peptide directing secretion. Low complexity-rich tracts occupy residues Gln-193–Ser-220, Ser-230–Gln-255, Lys-271–Gln-324, and Gln-521–Gln-544. Disordered stretches follow at residues Gln-193–Gln-255, Lys-271–Leu-349, Thr-518–Gln-544, Pro-638–Gly-671, and Gly-732–Gly-912. Composition is skewed to low complexity over residues Gly-732–Gln-757 and Gln-765–Thr-785. The segment covering Arg-803 to Gln-818 has biased composition (basic and acidic residues). Low complexity predominate over residues Ser-821 to Ser-845. Residues Glu-851–Asp-861 show a composition bias toward polar residues. Positions Gln-862–Ser-897 are enriched in low complexity. Residues Lys-898–Gly-912 are compositionally biased toward polar residues.

In terms of processing, proteolytically cleaved by the seminal metalloprotease Semp1. Cleavage appears to take place in the mated female. Detected in the male accessory glands (at protein level). Produced in the accessory glands and secreted into seminal fluid.

It localises to the secreted. Its function is as follows. Responsible for physiological and behavioral changes in mated female flies. Associates with sperm and localizes to specific regions of the female reproductive tract, including the sperm storage organs. It accelerates sperm accumulation into storage but does not mediate the entry of the first sperm into storage. Once sperm storage has initiated it seems to act as a guidance factor helping subsequent sperm move into storage, a corral concentrating sperm around the SSO entrances and/or a trigger for responses within the female that accelerate storage of sperm. The chain is Accessory gland protein Acp36DE (Acp36DE) from Drosophila melanogaster (Fruit fly).